The following is a 304-amino-acid chain: Phosphonates import ATP-binding protein PhnC 1 (304 aa).

The 237-residue stretch at 4 to 240 (VSLQNVTKLF…VIDDLYYAGS (237 aa)) folds into the ABC transporter domain. 37–44 (GPSGAGKS) provides a ligand contact to ATP. The interval 240–304 (SESTPVSHGD…TETDTGEAQL (65 aa)) is disordered. Polar residues predominate over residues 263-272 (TSVSSDMETT). The span at 289-304 (TDTETDTETDTGEAQL) shows a compositional bias: acidic residues.

It belongs to the ABC transporter superfamily. Phosphonates importer (TC 3.A.1.9.1) family. In terms of assembly, the complex is composed of two ATP-binding proteins (PhnC), two transmembrane proteins (PhnE) and a solute-binding protein (PhnD).

It is found in the cell membrane. It carries out the reaction phosphonate(out) + ATP + H2O = phosphonate(in) + ADP + phosphate + H(+). In terms of biological role, part of the ABC transporter complex PhnCDE involved in phosphonates import. Responsible for energy coupling to the transport system. This is Phosphonates import ATP-binding protein PhnC 1 from Haloquadratum walsbyi (strain DSM 16790 / HBSQ001).